The primary structure comprises 158 residues: Snaclec coagulation factor X-activating enzyme light chain 2 (158 aa).

The N-terminal stretch at 1–24 is a signal peptide; it reads MGRFISVSFGLLVVFLSLSGTGAG. 3 disulfides stabilise this stretch: C27-C38, C55-C152, and C127-C144. One can recognise a C-type lectin domain in the interval 34-153; it reads YRYFCYRVFK…CEERYLFVCK (120 aa). N82 carries N-linked (GlcNAc...) (complex) asparagine glycosylation.

This sequence belongs to the snaclec family. As to quaternary structure, heterotrimer; disulfide-linked. The heterotrimer consists of 1 heavy chain (a metalloproteinase) and 2 light chains: LC1 and LC2. In terms of processing, N-glycosylated; probably required for conformation. Removal of easily accessible sugars does not change its functional capacity, but removal of the core sugars with N-glycanase causes a virtually complete loss of enzyme activity, apparently as a result of major conformational changes in the molecule. Not O-glycosylated. Expressed by the venom gland.

It is found in the secreted. Its function is as follows. Regulatory subunit of the blood coagulation factor X- and IX-activating enzyme. The enzyme activates coagulation factor X (F10) by cleaving the Arg-Ile bond and is also able to activate coagulation factor IX (F9) and protein S (PROS1) by specific cleavage of Arg-Ile and Arg-Val bonds. May serve as an exosite by which the enzyme recognizes and binds to the Gla domain of factor X (F10) and factor IX (F9) in a calcium-dependent manner. In Daboia siamensis (Eastern Russel's viper), this protein is Snaclec coagulation factor X-activating enzyme light chain 2 (LC2).